The primary structure comprises 188 residues: EP300-interacting inhibitor of differentiation 1 (188 aa).

The segment at 1 to 122 (MSEMAELSEL…PEEEQLSGAG (122 aa)) is disordered. 2 stretches are compositionally biased toward acidic residues: residues 53–64 (LEEEGPMEEEEA) and 94–117 (FESEDEGEEFDDWEDDYDYPEEEQ). Residues 55-121 (EEGPMEEEEA…YPEEEQLSGA (67 aa)) form an interaction with NR0B2 region. The LXCXE motif motif lies at 179–183 (LGCDE).

As to quaternary structure, interacts via its LXCXE motif with the entire pocket region of RB1. Interacts with EP300, NR0B2 and TRIM27.

The protein localises to the nucleus. Its subcellular location is the cytoplasm. Interacts with RB1 and EP300 and acts as a repressor of MYOD1 transactivation. Inhibits EP300 and CBP histone acetyltransferase activity. May be involved in coupling cell cycle exit to the transcriptional activation of genes required for cellular differentiation. May act as a candidate coinhibitory factor for NR0B2 that can be directly linked to transcription inhibitory mechanisms. The protein is EP300-interacting inhibitor of differentiation 1 of Pongo abelii (Sumatran orangutan).